A 150-amino-acid chain; its full sequence is Cytochrome c oxidase subunit 5A, mitochondrial (150 aa).

Residues Met1 to Tyr41 constitute a mitochondrion transit peptide. The SIFI-degron signature appears at Leu2 to Ala17. 2 positions are modified to N6-acetyllysine: Lys87 and Lys113. Phosphothreonine is present on Thr141.

This sequence belongs to the cytochrome c oxidase subunit 5A family. Component of the cytochrome c oxidase (complex IV, CIV), a multisubunit enzyme composed of 14 subunits. The complex is composed of a catalytic core of 3 subunits MT-CO1, MT-CO2 and MT-CO3, encoded in the mitochondrial DNA, and 11 supernumerary subunits COX4I, COX5A, COX5B, COX6A, COX6B, COX6C, COX7A, COX7B, COX7C, COX8 and NDUFA4, which are encoded in the nuclear genome. The complex exists as a monomer or a dimer and forms supercomplexes (SCs) in the inner mitochondrial membrane with NADH-ubiquinone oxidoreductase (complex I, CI) and ubiquinol-cytochrome c oxidoreductase (cytochrome b-c1 complex, complex III, CIII), resulting in different assemblies (supercomplex SCI(1)III(2)IV(1) and megacomplex MCI(2)III(2)IV(2)). Interacts with AFG1L. Interacts with RAB5IF. Post-translationally, in response to mitochondrial stress, the precursor protein is ubiquitinated by the SIFI complex in the cytoplasm before mitochondrial import, leading to its degradation. Within the SIFI complex, UBR4 initiates ubiquitin chain that are further elongated or branched by KCMF1.

The protein localises to the mitochondrion inner membrane. It functions in the pathway energy metabolism; oxidative phosphorylation. Component of the cytochrome c oxidase, the last enzyme in the mitochondrial electron transport chain which drives oxidative phosphorylation. The respiratory chain contains 3 multisubunit complexes succinate dehydrogenase (complex II, CII), ubiquinol-cytochrome c oxidoreductase (cytochrome b-c1 complex, complex III, CIII) and cytochrome c oxidase (complex IV, CIV), that cooperate to transfer electrons derived from NADH and succinate to molecular oxygen, creating an electrochemical gradient over the inner membrane that drives transmembrane transport and the ATP synthase. Cytochrome c oxidase is the component of the respiratory chain that catalyzes the reduction of oxygen to water. Electrons originating from reduced cytochrome c in the intermembrane space (IMS) are transferred via the dinuclear copper A center (CU(A)) of subunit 2 and heme A of subunit 1 to the active site in subunit 1, a binuclear center (BNC) formed by heme A3 and copper B (CU(B)). The BNC reduces molecular oxygen to 2 water molecules using 4 electrons from cytochrome c in the IMS and 4 protons from the mitochondrial matrix. This chain is Cytochrome c oxidase subunit 5A, mitochondrial (COX5A), found in Gorilla gorilla gorilla (Western lowland gorilla).